The primary structure comprises 414 residues: Arginine deiminase (414 aa).

Cysteine 402 serves as the catalytic Amidino-cysteine intermediate.

The protein belongs to the arginine deiminase family.

The protein localises to the cytoplasm. The enzyme catalyses L-arginine + H2O = L-citrulline + NH4(+). Its pathway is amino-acid degradation; L-arginine degradation via ADI pathway; carbamoyl phosphate from L-arginine: step 1/2. This chain is Arginine deiminase, found in Oenococcus oeni (strain ATCC BAA-331 / PSU-1).